The sequence spans 283 residues: Phosphatidylglycerol--prolipoprotein diacylglyceryl transferase (283 aa).

3 helical membrane passes run leucine 14–leucine 34, methionine 56–tyrosine 76, and isoleucine 88–alanine 108. Arginine 139 is a binding site for a 1,2-diacyl-sn-glycero-3-phospho-(1'-sn-glycerol). A helical membrane pass occupies residues methionine 258 to glycine 278.

It belongs to the Lgt family.

It localises to the cell inner membrane. It catalyses the reaction L-cysteinyl-[prolipoprotein] + a 1,2-diacyl-sn-glycero-3-phospho-(1'-sn-glycerol) = an S-1,2-diacyl-sn-glyceryl-L-cysteinyl-[prolipoprotein] + sn-glycerol 1-phosphate + H(+). Its pathway is protein modification; lipoprotein biosynthesis (diacylglyceryl transfer). Functionally, catalyzes the transfer of the diacylglyceryl group from phosphatidylglycerol to the sulfhydryl group of the N-terminal cysteine of a prolipoprotein, the first step in the formation of mature lipoproteins. The sequence is that of Phosphatidylglycerol--prolipoprotein diacylglyceryl transferase from Chromobacterium violaceum (strain ATCC 12472 / DSM 30191 / JCM 1249 / CCUG 213 / NBRC 12614 / NCIMB 9131 / NCTC 9757 / MK).